Consider the following 237-residue polypeptide: uncharacterized protein (237 aa).

In terms of domain architecture, N-acetyltransferase spans 119–237 (VTVRRLTPTD…PAGLDGGLPA (119 aa)).

This is an uncharacterized protein from Streptomyces virginiae (Streptomyces cinnamonensis).